Reading from the N-terminus, the 165-residue chain is Ribosome maturation factor RimM (165 aa).

In terms of domain architecture, PRC barrel spans glutamate 94 to arginine 163.

It belongs to the RimM family. Binds ribosomal protein uS19.

It localises to the cytoplasm. Its function is as follows. An accessory protein needed during the final step in the assembly of 30S ribosomal subunit, possibly for assembly of the head region. Essential for efficient processing of 16S rRNA. May be needed both before and after RbfA during the maturation of 16S rRNA. It has affinity for free ribosomal 30S subunits but not for 70S ribosomes. The sequence is that of Ribosome maturation factor RimM from Rickettsia akari (strain Hartford).